The chain runs to 227 residues: Isoprenyl transferase (227 aa).

The active site involves D13. Position 13 (D13) interacts with Mg(2+). Substrate is bound by residues 14 to 17 (GNGR), W18, R26, H30, and 58 to 60 (STE). N61 functions as the Proton acceptor in the catalytic mechanism. Substrate is bound by residues W62, R64, R175, and 181–183 (RLS). Residue E194 coordinates Mg(2+).

It belongs to the UPP synthase family. Homodimer. Mg(2+) serves as cofactor.

Catalyzes the condensation of isopentenyl diphosphate (IPP) with allylic pyrophosphates generating different type of terpenoids. This Treponema denticola (strain ATCC 35405 / DSM 14222 / CIP 103919 / JCM 8153 / KCTC 15104) protein is Isoprenyl transferase.